A 457-amino-acid polypeptide reads, in one-letter code: tRNA (guanine(37)-N(1))-methyltransferase (457 aa).

Residues histidine 240, 278–279, 306–307, and asparagine 338 contribute to the S-adenosyl-L-methionine site; these read DL and DG.

It belongs to the class I-like SAM-binding methyltransferase superfamily. TRM5/TYW2 family. Monomer.

It localises to the mitochondrion matrix. The protein localises to the nucleus. It is found in the cytoplasm. The enzyme catalyses guanosine(37) in tRNA + S-adenosyl-L-methionine = N(1)-methylguanosine(37) in tRNA + S-adenosyl-L-homocysteine + H(+). Its function is as follows. Specifically methylates the N1 position of guanosine-37 in various cytoplasmic and mitochondrial tRNAs. Methylation is not dependent on the nature of the nucleoside 5' of the target nucleoside. This is the first step in the biosynthesis of wybutosine (yW), a modified base adjacent to the anticodon of tRNAs and required for accurate decoding. The sequence is that of tRNA (guanine(37)-N(1))-methyltransferase from Drosophila melanogaster (Fruit fly).